The sequence spans 235 residues: 1-(5-phosphoribosyl)-5-[(5-phosphoribosylamino)methylideneamino] imidazole-4-carboxamide isomerase (235 aa).

The active-site Proton acceptor is aspartate 8. Aspartate 128 serves as the catalytic Proton donor.

This sequence belongs to the HisA/HisF family.

The protein resides in the cytoplasm. It carries out the reaction 1-(5-phospho-beta-D-ribosyl)-5-[(5-phospho-beta-D-ribosylamino)methylideneamino]imidazole-4-carboxamide = 5-[(5-phospho-1-deoxy-D-ribulos-1-ylimino)methylamino]-1-(5-phospho-beta-D-ribosyl)imidazole-4-carboxamide. It functions in the pathway amino-acid biosynthesis; L-histidine biosynthesis; L-histidine from 5-phospho-alpha-D-ribose 1-diphosphate: step 4/9. In Thermus thermophilus (strain ATCC 27634 / DSM 579 / HB8), this protein is 1-(5-phosphoribosyl)-5-[(5-phosphoribosylamino)methylideneamino] imidazole-4-carboxamide isomerase.